The following is a 398-amino-acid chain: Phosphoglycerate kinase (398 aa).

Substrate is bound by residues aspartate 21–asparagine 23, arginine 36, histidine 59–arginine 62, arginine 119, and arginine 157. ATP is bound by residues lysine 208, glycine 296, glutamate 327, and glycine 354–serine 357.

The protein belongs to the phosphoglycerate kinase family. As to quaternary structure, monomer.

It localises to the cytoplasm. It catalyses the reaction (2R)-3-phosphoglycerate + ATP = (2R)-3-phospho-glyceroyl phosphate + ADP. The protein operates within carbohydrate degradation; glycolysis; pyruvate from D-glyceraldehyde 3-phosphate: step 2/5. This Streptococcus equi subsp. equi (strain 4047) protein is Phosphoglycerate kinase.